A 354-amino-acid chain; its full sequence is Ferrochelatase (354 aa).

The Fe cation site is built by His214 and Glu295.

The protein belongs to the ferrochelatase family.

The protein resides in the cytoplasm. It catalyses the reaction heme b + 2 H(+) = protoporphyrin IX + Fe(2+). Its pathway is porphyrin-containing compound metabolism; protoheme biosynthesis; protoheme from protoporphyrin-IX: step 1/1. Catalyzes the ferrous insertion into protoporphyrin IX. The polypeptide is Ferrochelatase (Burkholderia cenocepacia (strain HI2424)).